We begin with the raw amino-acid sequence, 182 residues long: Alkyl hydroperoxide reductase AhpD (182 aa).

The active-site Proton donor is the C132. A disulfide bridge connects residues C132 and C135. C135 functions as the Cysteine sulfenic acid (-SOH) intermediate in the catalytic mechanism.

This sequence belongs to the AhpD family.

It catalyses the reaction N(6)-[(R)-dihydrolipoyl]-L-lysyl-[lipoyl-carrier protein] + a hydroperoxide = N(6)-[(R)-lipoyl]-L-lysyl-[lipoyl-carrier protein] + an alcohol + H2O. Antioxidant protein with alkyl hydroperoxidase activity. Required for the reduction of the AhpC active site cysteine residues and for the regeneration of the AhpC enzyme activity. The sequence is that of Alkyl hydroperoxide reductase AhpD from Bradyrhizobium diazoefficiens (strain JCM 10833 / BCRC 13528 / IAM 13628 / NBRC 14792 / USDA 110).